The chain runs to 409 residues: Ubiquitin-associated domain-containing protein 1 (409 aa).

Residue Met1 is modified to N-acetylmethionine. The 85-residue stretch at 14–98 (LRLHICAADG…LLLIKKRAPS (85 aa)) folds into the Ubiquitin-like domain. The 45-residue stretch at 187-231 (DEDERVDETALRQLTEMGFPESRASKALRLNHMSVPQAMEWLIEH) folds into the UBA 1 domain. Positions 235–273 (PAIDTPLPGHAAQAEASAAAATSSSSSEAAVGTSVEDEE) are disordered. Residues 245 to 264 (AAQAEASAAAATSSSSSEAA) are compositionally biased toward low complexity. In terms of domain architecture, UBA 2 spans 292–332 (RADARAVISLMEMGFDEKEVIDALRVNNNQQNAACEWLLGD). The STI1 domain occupies 357 to 396 (NPVVQLGLTNPKTLLAFEDMLENPLNSTQWMNDPETGPVM).

Component of the KPC complex composed of RNF123/KPC1 and UBAC1/KPC2. Interacts (via ubiquitin-like domain) with RNF123. Interacts (via ubiquitin-like and UBA domains) with the proteasome via its N-terminal domain.

It localises to the cytoplasm. Its pathway is protein modification; protein ubiquitination. In terms of biological role, non-catalytic component of the KPC complex, a E3 ubiquitin-protein ligase complex that mediates polyubiquitination of target proteins, such as CDKN1B and NFKB1. The KPC complex catalyzes polyubiquitination and proteasome-mediated degradation of CDKN1B during G1 phase of the cell cycle. The KPC complex also acts as a key regulator of the NF-kappa-B signaling by promoting maturation of the NFKB1 component of NF-kappa-B by catalyzing ubiquitination of the NFKB1 p105 precursor. Within the KPC complex, UBAC1 acts as an adapter that promotes the transfer of target proteins that have been polyubiquitinated by RNF123/KPC1 to the 26S proteasome. The chain is Ubiquitin-associated domain-containing protein 1 (Ubac1) from Rattus norvegicus (Rat).